Here is a 344-residue protein sequence, read N- to C-terminus: UDP-N-acetylenolpyruvoylglucosamine reductase (344 aa).

The 171-residue stretch at 19–189 (INVTAKKIIF…IAVGIKIKKN (171 aa)) folds into the FAD-binding PCMH-type domain. R165 is an active-site residue. S235 (proton donor) is an active-site residue. E331 is an active-site residue.

It belongs to the MurB family. FAD is required as a cofactor.

The protein localises to the cytoplasm. The catalysed reaction is UDP-N-acetyl-alpha-D-muramate + NADP(+) = UDP-N-acetyl-3-O-(1-carboxyvinyl)-alpha-D-glucosamine + NADPH + H(+). Its pathway is cell wall biogenesis; peptidoglycan biosynthesis. In terms of biological role, cell wall formation. This is UDP-N-acetylenolpyruvoylglucosamine reductase from Buchnera aphidicola subsp. Schizaphis graminum (strain Sg).